The following is a 58-amino-acid chain: Large ribosomal subunit protein uL30 (58 aa).

It belongs to the universal ribosomal protein uL30 family. Part of the 50S ribosomal subunit.

The polypeptide is Large ribosomal subunit protein uL30 (Desulfovibrio desulfuricans (strain ATCC 27774 / DSM 6949 / MB)).